Reading from the N-terminus, the 562-residue chain is Dihydroxy-acid dehydratase (562 aa).

Residue Cys51 participates in [2Fe-2S] cluster binding. Asp83 serves as a coordination point for Mg(2+). Cys124 contacts [2Fe-2S] cluster. The Mg(2+) site is built by Asp125 and Lys126. Lys126 is modified (N6-carboxylysine). Residue Cys196 coordinates [2Fe-2S] cluster. Glu448 lines the Mg(2+) pocket. Residue Ser474 is the Proton acceptor of the active site.

It belongs to the IlvD/Edd family. In terms of assembly, homodimer. [2Fe-2S] cluster is required as a cofactor. It depends on Mg(2+) as a cofactor.

The catalysed reaction is (2R)-2,3-dihydroxy-3-methylbutanoate = 3-methyl-2-oxobutanoate + H2O. It catalyses the reaction (2R,3R)-2,3-dihydroxy-3-methylpentanoate = (S)-3-methyl-2-oxopentanoate + H2O. Its pathway is amino-acid biosynthesis; L-isoleucine biosynthesis; L-isoleucine from 2-oxobutanoate: step 3/4. The protein operates within amino-acid biosynthesis; L-valine biosynthesis; L-valine from pyruvate: step 3/4. In terms of biological role, functions in the biosynthesis of branched-chain amino acids. Catalyzes the dehydration of (2R,3R)-2,3-dihydroxy-3-methylpentanoate (2,3-dihydroxy-3-methylvalerate) into 2-oxo-3-methylpentanoate (2-oxo-3-methylvalerate) and of (2R)-2,3-dihydroxy-3-methylbutanoate (2,3-dihydroxyisovalerate) into 2-oxo-3-methylbutanoate (2-oxoisovalerate), the penultimate precursor to L-isoleucine and L-valine, respectively. The sequence is that of Dihydroxy-acid dehydratase from Pyrobaculum aerophilum (strain ATCC 51768 / DSM 7523 / JCM 9630 / CIP 104966 / NBRC 100827 / IM2).